A 710-amino-acid polypeptide reads, in one-letter code: PWWP domain-containing DNA repair factor 3A (710 aa).

The tract at residues 106–160 is disordered; that stretch reads QESSAGTGRADRSLRGKPMEHVSSPCDSNSSSLPRGDVLGSSRPHRRRPCVQQSL. Positions 114–125 are enriched in basic and acidic residues; sequence RADRSLRGKPME. Residues 128-137 are compositionally biased toward low complexity; that stretch reads SSPCDSNSSS. Serine 161 is subject to Phosphoserine. Disordered regions lie at residues 177–204 and 230–398; these read KKGL…ESGS and NGSS…EEPP. A compositionally biased stretch (low complexity) spans 288-297; sequence PSACSEPGEC. Serine 374 and serine 375 each carry phosphoserine. Residues 375–385 show a composition bias toward polar residues; the sequence is SEESMGSNSMR. The PWWP domain occupies 411–472; sequence VGMLVWHKHK…KHFDCKEKQT (62 aa).

This sequence belongs to the PWWP3A family. In terms of assembly, interacts with TP53BP1 (via BRCT domain); the interaction is not dependent on its phosphorylation status. Binds nucleosomes. Interacts with trimethylated 'Lys-36' of histone H3 (H3K36me3) (in vitro).

The protein localises to the nucleus. Its function is as follows. Involved in the DNA damage response pathway by contributing to the maintenance of chromatin architecture. Recruited to the vicinity of DNA breaks by TP53BP1 and plays an accessory role to facilitate damage-induced chromatin changes and promoting chromatin relaxation. Required for efficient DNA repair and cell survival following DNA damage. The chain is PWWP domain-containing DNA repair factor 3A from Homo sapiens (Human).